Consider the following 343-residue polypeptide: MNIHRSTPITIARYGRSRNKTQDFEELSSIRSAEPSQSFSPNLGSPSPPETPNLSHCVSCIGKYLLLEPLEGDHVFRAVHLHSGEELVCKVFEISCYQESLAPCFCLSAHSNINQITEILLGETKAYVFFERSYGDMHSFVRTCKKLREEEAARLFYQIASAVAHCHDGGLVLRDLKLRKFIFKDEERTRVKLESLEDAYILRGDDDSLSDKHGCPAYVSPEILNTSGSYSGKAADVWSLGVMLYTMLVGRYPFHDIEPSSLFSKIRRGQFNIPETLSPKAKCLIRSILRREPSERLTSQEILDHPWFSTDFSVSNSGFGAKEACDQLVPDVNMEENLDPFFN.

Residues 25 to 50 (EELSSIRSAEPSQSFSPNLGSPSPPE) are disordered. A compositionally biased stretch (polar residues) spans 29 to 45 (SIRSAEPSQSFSPNLGS). The Protein kinase domain maps to 61-308 (IGKYLLLEPL…SQEILDHPWF (248 aa)).

Belongs to the protein kinase superfamily. CAMK Ser/Thr protein kinase family. Tribbles subfamily.

It is found in the cytoplasm. The protein localises to the cytoskeleton. Interacts with MAPK kinases and regulates activation of MAP kinases. Does not display kinase activity. The protein is Tribbles homolog 2 of Mus musculus (Mouse).